A 166-amino-acid chain; its full sequence is UPF0304 protein VC_1871 (166 aa).

This sequence belongs to the UPF0304 family.

The sequence is that of UPF0304 protein VC_1871 from Vibrio cholerae serotype O1 (strain ATCC 39315 / El Tor Inaba N16961).